The sequence spans 637 residues: Threonine--tRNA ligase (637 aa).

The TGS domain occupies 1 to 61 (MPVITLPDGS…DKDAELAIVT (61 aa)). Positions 242–533 (DHRKIGKKLG…LIEHYEGAFP (292 aa)) are catalytic. Cysteine 333, histidine 384, and histidine 510 together coordinate Zn(2+).

This sequence belongs to the class-II aminoacyl-tRNA synthetase family. In terms of assembly, homodimer. Requires Zn(2+) as cofactor.

Its subcellular location is the cytoplasm. It carries out the reaction tRNA(Thr) + L-threonine + ATP = L-threonyl-tRNA(Thr) + AMP + diphosphate + H(+). Functionally, catalyzes the attachment of threonine to tRNA(Thr) in a two-step reaction: L-threonine is first activated by ATP to form Thr-AMP and then transferred to the acceptor end of tRNA(Thr). Also edits incorrectly charged L-seryl-tRNA(Thr). This Hahella chejuensis (strain KCTC 2396) protein is Threonine--tRNA ligase.